The sequence spans 122 residues: Ribosome-binding factor A (122 aa).

It belongs to the RbfA family. As to quaternary structure, monomer. Binds 30S ribosomal subunits, but not 50S ribosomal subunits or 70S ribosomes.

The protein resides in the cytoplasm. One of several proteins that assist in the late maturation steps of the functional core of the 30S ribosomal subunit. Associates with free 30S ribosomal subunits (but not with 30S subunits that are part of 70S ribosomes or polysomes). Required for efficient processing of 16S rRNA. May interact with the 5'-terminal helix region of 16S rRNA. In Polaromonas naphthalenivorans (strain CJ2), this protein is Ribosome-binding factor A.